The sequence spans 545 residues: Leucine-rich repeat LGI family member 2 (545 aa).

The N-terminal stretch at M1–A28 is a signal peptide. Positions Q29 to S65 constitute an LRRNT domain. A glycan (N-linked (GlcNAc...) asparagine) is linked at N70. 3 LRR repeats span residues S86–G107, H110–G131, and D134–D155. Residues N167–T217 form the LRRCT domain. N186 carries an N-linked (GlcNAc...) asparagine glycan. EAR repeat units follow at residues D219–H261, N265–E307, K311–S358, G360–K403, K407–S450, Q452–K494, and L498–I540. Residue N271 is glycosylated (N-linked (GlcNAc...) asparagine). The N-linked (GlcNAc...) asparagine glycan is linked to N402.

As to expression, brain, heart and placenta.

Its subcellular location is the secreted. Required for the development of soma-targeting inhibitory GABAergic synapses made by parvalbumin-positive basket cells. The sequence is that of Leucine-rich repeat LGI family member 2 (LGI2) from Homo sapiens (Human).